Consider the following 1889-residue polypeptide: Vacuolar membrane-associated protein IML1 (1889 aa).

Disordered stretches follow at residues 1–74 (MPPP…SRLR), 515–540 (QPGQ…TLTF), 551–570 (SPNK…PLSS), 716–808 (ARLP…LKAP), 838–900 (AGAS…DSPT), and 1252–1272 (PPNE…DTNP). Positions 47–60 (YSNSPGDTVSSNST) are enriched in polar residues. A compositionally biased stretch (basic and acidic residues) spans 729–742 (RCRDHEETPRRQAL). Composition is skewed to polar residues over residues 747–766 (PLGT…QTLP), 787–804 (KSMS…SSSP), and 840–853 (ASKT…SQDL). Over residues 865–877 (SSSRRLTGGTSTS) the composition is skewed to low complexity. The region spanning 1331 to 1417 (ENGGVRMQNR…DGQYFYQISN (87 aa)) is the DEP domain. 2 disordered regions span residues 1424–1484 (PPGW…GNKP) and 1724–1824 (PTPL…WSTW). Low complexity-rich tracts occupy residues 1737 to 1789 (SPAL…PGLT) and 1801 to 1811 (PSTSATTTTAC).

It belongs to the IML1 family.

It localises to the vacuole membrane. This is Vacuolar membrane-associated protein IML1 (IML1) from Chaetomium globosum (strain ATCC 6205 / CBS 148.51 / DSM 1962 / NBRC 6347 / NRRL 1970) (Soil fungus).